Reading from the N-terminus, the 561-residue chain is 4-coumarate--CoA ligase 3 (561 aa).

The ATP site is built by Ser213, Ser214, Gly215, Thr216, Thr217, and Lys221. The (E)-4-coumaroyl-AMP site is built by Tyr263 and Ser267. Lys284 is a binding site for CoA. The tract at residues 286 to 355 (EIGALLDLIQ…RRLPQAILGQ (70 aa)) is SBD1. 5 residues coordinate (E)-4-coumaroyl-AMP: Ala333, Gln355, Gly356, Thr360, and Met368. Residues Gln355, Gly356, and Thr360 each contribute to the ATP site. Residues 356-423 (GYGMTEAGPV…IRGQQIMKEY (68 aa)) form an SBD2 region. Positions 444 and 459 each coordinate ATP. Residues Lys461 and Lys465 each coordinate (E)-4-coumaroyl-AMP. 2 residues coordinate CoA: Lys467 and Gly468. Lys550 serves as a coordination point for ATP.

Belongs to the ATP-dependent AMP-binding enzyme family. Mg(2+) serves as cofactor. In terms of tissue distribution, preferentially expressed in leaves, flowers and siliques.

It carries out the reaction (E)-4-coumarate + ATP + CoA = (E)-4-coumaroyl-CoA + AMP + diphosphate. The catalysed reaction is (E)-caffeate + ATP + CoA = (E)-caffeoyl-CoA + AMP + diphosphate. It catalyses the reaction (E)-ferulate + ATP + CoA = (E)-feruloyl-CoA + AMP + diphosphate. The enzyme catalyses (E)-4-coumarate + ATP + H(+) = (E)-4-coumaroyl-AMP + diphosphate. It carries out the reaction (E)-4-coumaroyl-AMP + CoA = (E)-4-coumaroyl-CoA + AMP + H(+). The catalysed reaction is (E)-caffeate + ATP + H(+) = (E)-caffeoyl-AMP + diphosphate. It catalyses the reaction (E)-caffeoyl-AMP + CoA = (E)-caffeoyl-CoA + AMP + H(+). The enzyme catalyses (E)-ferulate + ATP + H(+) = (E)-feruloyl-AMP + diphosphate. It carries out the reaction (E)-feruloyl-AMP + CoA = (E)-feruloyl-CoA + AMP + H(+). Its pathway is phytoalexin biosynthesis; 3,4',5-trihydroxystilbene biosynthesis; 3,4',5-trihydroxystilbene from trans-4-coumarate: step 1/2. Its function is as follows. Produces CoA thioesters of a variety of hydroxy- and methoxy-substituted cinnamic acids, which are used to synthesize several phenylpropanoid-derived compounds, including anthocyanins, flavonoids, isoflavonoids, coumarins, lignin, suberin and wall-bound phenolics. Follows a two-step reaction mechanism, wherein the carboxylate substrate first undergoes adenylation by ATP, followed by a thioesterification in the presence of CoA to yield the final CoA thioesters. The polypeptide is 4-coumarate--CoA ligase 3 (Arabidopsis thaliana (Mouse-ear cress)).